Reading from the N-terminus, the 930-residue chain is A disintegrin and metalloproteinase with thrombospondin motifs 5 (930 aa).

The N-terminal stretch at 1 to 16 is a signal peptide; it reads MLLGWASLLLCAFRLP. The propeptide occupies 17-261; that stretch reads LAAVGPAATP…PQTWWRRRRR (245 aa). Disordered regions lie at residues 24–69 and 206–231; these read ATPA…QRRR and RASC…PSGR. The span at 31 to 42 shows a compositional bias: low complexity; the sequence is AGQPPTAAAAAQ. The span at 46–59 shows a compositional bias: basic and acidic residues; it reads RQGEEVQERAEPPG. Positions 207 to 214 match the Cysteine switch motif; it reads ASCETPAS. Residue cysteine 209 coordinates Zn(2+). One can recognise a Peptidase M12B domain in the interval 267–476; that stretch reads RQVELLLVAD…GHGNCLLDLP (210 aa). 8 disulfides stabilise this stretch: cysteine 342/cysteine 394, cysteine 371/cysteine 376, cysteine 388/cysteine 471, cysteine 426/cysteine 455, cysteine 497/cysteine 519, cysteine 508/cysteine 529, cysteine 514/cysteine 548, and cysteine 542/cysteine 553. Histidine 410 is a binding site for Zn(2+). Glutamate 411 is a catalytic residue. The Zn(2+) site is built by histidine 414 and histidine 420. In terms of domain architecture, Disintegrin spans 485–566; the sequence is ELPGQTYDAT…TKKKYYSTSS (82 aa). An N-linked (GlcNAc...) asparagine glycan is attached at asparagine 498. Residues 567–622 form the TSP type-1 1 domain; that stretch reads HGNWGSWGSWGQCSRSCGGGVQFAYRHCNNPAPRNNGRYCTGKRAIYRSCSLMPCP. Tryptophan 570 and tryptophan 573 each carry a C-linked (Man) tryptophan glycan. Intrachain disulfides connect cysteine 579/cysteine 616, cysteine 583/cysteine 621, and cysteine 594/cysteine 606. Serine 582 carries O-linked (Fuc...) serine glycosylation. Residues asparagine 728, asparagine 802, and asparagine 807 are each glycosylated (N-linked (GlcNAc...) asparagine). The tract at residues 732–874 is spacer; it reads TKIVGTFNKK…HGSNKVGSHT (143 aa). The 55-residue stretch at 875-929 folds into the TSP type-1 2 domain; the sequence is SQPQWVTGPWLACSRTCDTGWHTRTVQCQDGNRKLAKGCPLSQRPSAFKQCLLKK.

Zn(2+) is required as a cofactor. The precursor is cleaved by furin and PCSK7 outside of the cell. In terms of processing, glycosylated. Can be O-fucosylated by POFUT2 on a serine or a threonine residue found within the consensus sequence C1-X(2)-(S/T)-C2-G of the TSP type-1 repeat domains where C1 and C2 are the first and second cysteine residue of the repeat, respectively. Fucosylated repeats can then be further glycosylated by the addition of a beta-1,3-glucose residue by the glucosyltransferase, B3GALTL. Fucosylation mediates the efficient secretion of ADAMTS family members. Can also be C-glycosylated with one or two mannose molecules on tryptophan residues within the consensus sequence W-X-X-W of the TPRs, and N-glycosylated. These other glycosylations can also facilitate secretion. Expressed at low level in placenta primarily but also detected in heart and brain, cervix, uterus, bladder, esophagus, rib cartilage, chondroblastoma, fibrous tissue and a joint capsule from an arthritic patient.

Its subcellular location is the secreted. The protein resides in the extracellular space. It is found in the extracellular matrix. Metalloproteinase that plays an important role in connective tissue organization, development, inflammation and cell migration. Extracellular matrix (ECM) degrading enzyme that show proteolytic activity toward the hyalectan group of chondroitin sulfate proteoglycans (CSPGs) including ACAN, VCAN, BCAN and NCAN. Cleavage within the hyalectans occurs at Glu-Xaa recognition motifs. Plays a role in embryonic development, including limb and cardiac morphogenesis, and skeletal muscle development through its VCAN remodeling properties. Cleaves VCAN in the pericellular matrix surrounding myoblasts, facilitating myoblast contact and fusion which is required for skeletal muscle development and regeneration. Participates in development of brown adipose tissue and browning of white adipose tissue. Plays an important role for T-lymphocyte migration from draining lymph nodes following viral infection. The polypeptide is A disintegrin and metalloproteinase with thrombospondin motifs 5 (ADAMTS5) (Homo sapiens (Human)).